A 606-amino-acid polypeptide reads, in one-letter code: Gamma-aminobutyric acid receptor subunit beta (606 aa).

An N-terminal signal peptide occupies residues 1–44; it reads MSDSKMDKLARMAPLPRTPLLTIWLAINMALIAQETGHKRIHTV. The Extracellular portion of the chain corresponds to 45–268; sequence QAATGGGSML…CEIQFVRSMG (224 aa). Residue Asn-58 is glycosylated (N-linked (GlcNAc...) asparagine). A disulfide bridge links Cys-185 with Cys-199. The N-linked (GlcNAc...) asparagine glycan is linked to Asn-253. 3 consecutive transmembrane segments (helical) span residues 269–291, 297–316, and 333–356; these read YYLI…SFWL, PARV…LMSS, and YLGT…YMAK. The Cytoplasmic portion of the chain corresponds to 357–568; sequence RIQMRKQRFM…LGITPSDIDK (212 aa). 2 disordered regions span residues 376–451 and 482–542; these read KQQL…VSNR and HDPK…AAVP. The span at 381-395 shows a compositional bias: low complexity; sequence GANQQQANPNPNANV. A compositionally biased stretch (gly residues) spans 396-425; that stretch reads GGPGGVGVGPGGPGGPGGGVNVGVGMGMGP. Over residues 430-443 the composition is skewed to basic residues; it reads GHGHHAHSHGHPHA. Residues 499–536 show a composition bias toward gly residues; the sequence is GGRGGPQSHGPGPGQGGGPPGGGGGGGGGGGPPEGGGD. Residues 569-590 form a helical membrane-spanning segment; the sequence is YSRIVFPVCFVCFNLMYWIIYL.

It belongs to the ligand-gated ion channel (TC 1.A.9) family. Gamma-aminobutyric acid receptor (TC 1.A.9.5) subfamily. As to quaternary structure, forms oligomers. Interacts with Nlg4; the interaction mediates Rdl clustering. Interacts with Fbxl4; the interaction mediates Rdl degradation. Expressed in different parts of the brain: the mushroom bodies (alpha, alpha', beta, beta', gamma lobes and peduncles), the neurons projecting to the columnar-type neuron LC9 optic glomerulus, in interneurons connecting the paired olfactory lobes, antennal lobes, PDF-expressing small and large ventral lateral neurons (LNvs) of the circadian clock and lobula columnar neuron 11 (LC11) (at protein level). Expressed in all major ON pathway medulla neurons (Mi1, Tm3, Mi4, and Mi9) and in OFF pathway neurons (Tm1, Tm2, Tm4, and Tm9).

It localises to the cell membrane. The protein localises to the postsynaptic cell membrane. Its subcellular location is the cell projection. The protein resides in the dendrite. It is found in the axon. Activated by agonist muscimol. Insensitive to zinc, glycine, glutamate, and baclofen, loreclezole, to antagonist bicuculline, glycine-receptor antagonist strychnine, and nonselective GABA and glycine antagonist RU 5135. Insensitive to flunitrazepam, pentobarbitone or pregnane steroids such as 5alpha-pregnan-3alpha-ol-20-one. Inhibited by insecticides picrotoxin (PTX), cyclodiene dieldrin, TBPS and lindane. Inhibited by ivermectin, fipronil and pyrafluprole. Its activity is regulated as follows. Inhibited by insecticides picrotoxin (PTX). Functionally, gamma-aminobutyric acid (GABA) receptor voltage channel subunit. GABA, an inhibitory neurotransmitter, mediates neuronal inhibition by binding to the GABA receptor and opening an integral chloride channel. Together with glutamate receptor GluClalpha, plays an important role in the visual response by regulating the activity of ON/OFF-selective neurons. Plays a role in promoting sleep and sleep latency by regulating the activity of peptidergic PDF neurons. In large ventral lateral clock neurons, clustering is mediated by Nlg4 and protein levels undergo daily degradation in response to the circadian clock. In neurons in the mushroom bodies, has a role in odor memory acquisition where it inhibits appetitive and aversive olfactory learning, probably upstream of Adcy1/adenylate cyclase 1 and GTPase activating protein Nf1. In male-specific GABAergic neurons, plays a role in inhibiting male aggressive behavior during courtship. Gamma-aminobutyric acid (GABA) receptor voltage channel subunit. The chain is Gamma-aminobutyric acid receptor subunit beta (Rdl) from Drosophila melanogaster (Fruit fly).